The sequence spans 65 residues: Large ribosomal subunit protein bL35 (65 aa).

This sequence belongs to the bacterial ribosomal protein bL35 family.

The polypeptide is Large ribosomal subunit protein bL35 (Buchnera aphidicola subsp. Cinara cedri (strain Cc)).